A 672-amino-acid chain; its full sequence is UvrABC system protein B (672 aa).

A Helicase ATP-binding domain is found at 26–181 (AGLEDGLAYQ…ILQRLAELQY (156 aa)). 39–46 (GVTGSGKT) lines the ATP pocket. The short motif at 92-115 (YYDYYQPEAYVPSSDTYIEKDASI) is the Beta-hairpin element. In terms of domain architecture, Helicase C-terminal spans 430-592 (QVDDLLSEIK…ITPKSIQKAV (163 aa)). Residues 631–666 (AKELRKLEEQMYHHARNLEFEEAAAVRDKIQHIRKG) enclose the UVR domain.

Belongs to the UvrB family. Forms a heterotetramer with UvrA during the search for lesions. Interacts with UvrC in an incision complex.

Its subcellular location is the cytoplasm. In terms of biological role, the UvrABC repair system catalyzes the recognition and processing of DNA lesions. A damage recognition complex composed of 2 UvrA and 2 UvrB subunits scans DNA for abnormalities. Upon binding of the UvrA(2)B(2) complex to a putative damaged site, the DNA wraps around one UvrB monomer. DNA wrap is dependent on ATP binding by UvrB and probably causes local melting of the DNA helix, facilitating insertion of UvrB beta-hairpin between the DNA strands. Then UvrB probes one DNA strand for the presence of a lesion. If a lesion is found the UvrA subunits dissociate and the UvrB-DNA preincision complex is formed. This complex is subsequently bound by UvrC and the second UvrB is released. If no lesion is found, the DNA wraps around the other UvrB subunit that will check the other stand for damage. This Coxiella burnetii (strain Dugway 5J108-111) protein is UvrABC system protein B.